Consider the following 467-residue polypeptide: Probable endopeptidase p60 (467 aa).

The N-terminal stretch at 1-27 (MNMKKATIAATAGIAVTAFAAPTIASA) is a signal peptide. The region spanning 28–71 (STVVVEAGDTLWGIAQSKGTTVDAIKKANNLTTDKIVPGQKLQV) is the LysM 1 domain. One can recognise an SH3b domain in the interval 79 to 143 (KAEKSVSATW…VNGKYLTDKA (65 aa)). Disordered regions lie at residues 154–199 (KKET…QNAT) and 247–348 (KTVA…GSTN). Low complexity predominate over residues 172 to 185 (KQPTTQQTAPAPKA). The 44-residue stretch at 199–242 (TTHNVKSGDTIWALSVKYGVSVQDIMSWNNLSSSSIYVGQKLAI) folds into the LysM 2 domain. Residues 288 to 348 (TEQQTTTKAP…NTNTNQGSTN (61 aa)) are compositionally biased toward low complexity. The segment at 330 to 343 (TNTNTNTNTNTNTN) is 7 X 2 AA tandem repeats of T-N. One can recognise a NlpC/P60 domain in the interval 349 to 467 (NASASALIAE…GKFLVGFGRV (119 aa)). The Nucleophile role is filled by cysteine 379. The active-site Proton acceptor is the histidine 429. Asparagine 441 is an active-site residue.

Belongs to the peptidase C40 family.

This major extracellular protein may be involved in the invasion of non-professional phagocytic cells by Listeria. In Listeria innocua serovar 6a (strain ATCC BAA-680 / CLIP 11262), this protein is Probable endopeptidase p60 (iap).